The sequence spans 125 residues: Translation initiation factor 5A (125 aa).

A Hypusine modification is found at lysine 36.

The protein belongs to the eIF-5A family.

It is found in the cytoplasm. Its function is as follows. Functions by promoting the formation of the first peptide bond. This Halorubrum lacusprofundi (strain ATCC 49239 / DSM 5036 / JCM 8891 / ACAM 34) protein is Translation initiation factor 5A (eIF5A).